Here is a 691-residue protein sequence, read N- to C-terminus: Elongation factor G (691 aa).

Residues 8 to 282 enclose the tr-type G domain; sequence ERVRNIGIAA…AVVDYLPAPI (275 aa). GTP-binding positions include 17–24, 81–85, and 135–138; these read AHIDAGKT, DTPGH, and NKMD.

It belongs to the TRAFAC class translation factor GTPase superfamily. Classic translation factor GTPase family. EF-G/EF-2 subfamily.

It is found in the cytoplasm. Catalyzes the GTP-dependent ribosomal translocation step during translation elongation. During this step, the ribosome changes from the pre-translocational (PRE) to the post-translocational (POST) state as the newly formed A-site-bound peptidyl-tRNA and P-site-bound deacylated tRNA move to the P and E sites, respectively. Catalyzes the coordinated movement of the two tRNA molecules, the mRNA and conformational changes in the ribosome. The protein is Elongation factor G of Synechococcus sp. (strain CC9311).